A 171-amino-acid polypeptide reads, in one-letter code: Replication restart protein PriC (171 aa).

This sequence belongs to the PriC family. Monomer. Component of the replication restart primosome, which is composed of PriA, PriB, PriC, DnaBe and DnaT; DnaG primase associates transiently with this complex. Interacts with the C-terminus of SSB. SSB interaction is required to load the main replicative helicase onto substrate replication forks. Interacts with helicase DnaB alone and in the DnaB-DnaC complex, probably 1:1 binding with DnaB.

Its function is as follows. Involved in the restart of stalled replication forks, which reloads the DnaB replicative helicase on sites other than the origin of replication. In vitro can load (E.coli) DnaB replicative helicase from a DnaB-DnaC complex on a single-stranded DNA (ssDNA)-binding protein (SSB)-coated stalled replication fork with no leading- or lagging-strand in the absence of other primosome proteins (PriA, PriB or DnaT). Binds SSB (tested with E.coli protein) and ssDNA. Complements priC in an E.coli priB-priC double deletion. The polypeptide is Replication restart protein PriC (Cronobacter sakazakii (strain ATCC BAA-894) (Enterobacter sakazakii)).